The primary structure comprises 303 residues: Heme A synthase (303 aa).

Residues Met-1 to Lys-8 lie on the Cytoplasmic side of the membrane. The chain crosses the membrane as a helical span at residues Trp-9–Thr-29. The Extracellular portion of the chain corresponds to Lys-30–Ser-67. A disulfide bridge connects residues Cys-37 and Cys-44. Glu-60 is an active-site residue. A heme o-binding site is contributed by His-63. A helical membrane pass occupies residues Ala-68–Ile-88. The Cytoplasmic segment spans residues Lys-89 to Pro-93. A helical membrane pass occupies residues Leu-94 to Ile-114. Residues Trp-115–His-125 lie on the Extracellular side of the membrane. His-125 contacts heme o. The chain crosses the membrane as a helical span at residues Phe-126–Ile-146. The Cytoplasmic segment spans residues Asp-147–Arg-163. A helical membrane pass occupies residues Leu-164–His-184. The Extracellular segment spans residues Ala-185–Arg-215. His-214 is a heme b binding site. The chain crosses the membrane as a helical span at residues Ile-216–Tyr-236. Residues Pro-237–Tyr-244 lie on the Cytoplasmic side of the membrane. Residues Gly-245–Met-265 traverse the membrane as a helical segment. Residues Thr-266 to Leu-270 are Extracellular-facing. Residues Ile-271–Ile-291 traverse the membrane as a helical segment. Position 276 (His-276) interacts with heme b. Residues Met-292 to Gln-303 are Cytoplasmic-facing.

The protein belongs to the COX15/CtaA family. Type 1 subfamily. As to quaternary structure, interacts with CtaB. Requires heme b as cofactor.

Its subcellular location is the cell membrane. The catalysed reaction is Fe(II)-heme o + 2 A + H2O = Fe(II)-heme a + 2 AH2. It functions in the pathway porphyrin-containing compound metabolism; heme A biosynthesis; heme A from heme O: step 1/1. Its function is as follows. Catalyzes the conversion of heme O to heme A by two successive hydroxylations of the methyl group at C8. The first hydroxylation forms heme I, the second hydroxylation results in an unstable dihydroxymethyl group, which spontaneously dehydrates, resulting in the formyl group of heme A. This Staphylococcus aureus (strain bovine RF122 / ET3-1) protein is Heme A synthase.